The primary structure comprises 572 residues: Acetyl-coenzyme A synthetase (572 aa).

Residue threonine 260 participates in CoA binding. Residues 333-335 (GEP), 354-359 (DTWWMT), aspartate 440, and arginine 455 each bind ATP. Residue serine 463 coordinates CoA. Arginine 466 is a binding site for ATP. Mg(2+)-binding residues include valine 477, histidine 479, and isoleucine 482. Lysine 524 is a binding site for CoA. Lysine 549 is subject to N6-acetyllysine.

This sequence belongs to the ATP-dependent AMP-binding enzyme family. As to quaternary structure, interacts with FloT. The cofactor is Mg(2+). Acetylated. Deacetylation by the SIR2-homolog deacetylase activates the enzyme.

The protein resides in the cell membrane. It localises to the membrane raft. The enzyme catalyses acetate + ATP + CoA = acetyl-CoA + AMP + diphosphate. In terms of biological role, catalyzes the conversion of acetate into acetyl-CoA (AcCoA), an essential intermediate at the junction of anabolic and catabolic pathways. AcsA undergoes a two-step reaction. In the first half reaction, AcsA combines acetate with ATP to form acetyl-adenylate (AcAMP) intermediate. In the second half reaction, it can then transfer the acetyl group from AcAMP to the sulfhydryl group of CoA, forming the product AcCoA. Has a role in growth and sporulation on acetate. The protein is Acetyl-coenzyme A synthetase (acsA) of Bacillus subtilis (strain 168).